A 301-amino-acid polypeptide reads, in one-letter code: Uricase-2 isozyme 2 (301 aa).

Residues lysine 17 and threonine 63 each act as charge relay system in the active site. The urate site is built by threonine 63, aspartate 64, phenylalanine 165, arginine 182, valine 237, glutamine 238, and asparagine 257. Histidine 259 acts as the Charge relay system in catalysis. The short motif at 299 to 301 (SKL) is the Microbody targeting signal element.

The protein belongs to the uricase family.

The protein localises to the peroxisome. It catalyses the reaction urate + O2 + H2O = 5-hydroxyisourate + H2O2. It participates in purine metabolism; urate degradation; (S)-allantoin from urate: step 1/3. Functionally, catalyzes the oxidation of uric acid to 5-hydroxyisourate, which is further processed to form (S)-allantoin. The polypeptide is Uricase-2 isozyme 2 (Canavalia lineata (Beach bean)).